The chain runs to 237 residues: Large ribosomal subunit protein uL2 (237 aa).

Over residues 1-11 (MGKRLISQNRG) the composition is skewed to polar residues. 2 disordered regions span residues 1-26 (MGKR…KRKG) and 204-237 (PYGG…SRRT). Basic residues-rich tracts occupy residues 13–26 (GTPK…KRKG) and 228–237 (KVGHIASRRT).

Belongs to the universal ribosomal protein uL2 family. In terms of assembly, part of the 50S ribosomal subunit. Forms a bridge to the 30S subunit in the 70S ribosome.

In terms of biological role, one of the primary rRNA binding proteins. Required for association of the 30S and 50S subunits to form the 70S ribosome, for tRNA binding and peptide bond formation. It has been suggested to have peptidyltransferase activity; this is somewhat controversial. Makes several contacts with the 16S rRNA in the 70S ribosome. The polypeptide is Large ribosomal subunit protein uL2 (Methanococcus vannielii).